The sequence spans 1680 residues: MGSRRAAGRGWGLGGRAGAGGDSEDDGPVWTPGPASRSYLLSVRPEASLSSNRLSHPSSGRSTFCSIIAQLTEETQPLFETTLKSRAVSEDSDVRFTCIVTGYPEPEVTWYKDDIELDRYCGLPKYEITHQGNRHTLQLYRCQEEDAAIYQASARNTKGIVSCSGVLEVGTMTEYKIHQRWFAKLKRKAAAKMREIEQSWKHGKEASGEADTLLRKISPDRFQRKRRLSGVEEAVLSTPVREMEEGSSAAWQEGETESAQHPGLGLINSFAPGEAPTNGEPAPENGEDEERGLLTYICEVMELGPQNSPPKESGAKKKRKDEESKPGEQKLELEKAEGSQCSSENVVPSTDKPNSSRREKSTDTQPAQTQPRGRVARGPGIESTRKTASVLGIQDKVQDVPAPAPAPVPAPALAPAPVPVPAPTPVPSRSSEQVYFSLKDMFMETTRAGRSQEEEKPPPPSTRVAGESPPGKTPVKSRLEKVPMVSSQPTSSMVPPPIKPLNRKRFAPPKSKVESTTTSLSSQTSESMAQSLGKALPSASTQVPTPPARRRHGTRDSPLQGQTSHKTPGEALESPATVAPTKSANSSSDTVSVDHDSSGNQGATEPMDTETQEDGRTLVDGRTGSRKKTHTDGKLQVDGRTQGDGAQDRAHASPRTQAGEKAPTDVVTQGSERPQSDRSSWKNLVTQRRVDMQVGQMQAGERWQQDPGDARIQEEEKETQSAAGSIPVAFETQSEQLSMASLSSLPGALKGSPSGCPRESQAIECFEKSTEAPCVQERSDLMLRSEEAAFRSHEDGLLGPPSGNRTYPTQLPPEGHSEHLGGQTHQRSEQEDSLSQCPKKEQPQEPLHVGLSGGHSTGLSQEVPAMPSLPGTGLTSSLQEELPGTAASLHTNTDVPLPSRDQDFPSSAPTLQLGPGSPTQSHPPEAMATSSEGACAKEPNVDGRSSGTRSCDPGLIDSLKNYLLLLLKLSSPETSEARAESQEVADTGGLTSSSTLVPTMEVAGLSPRTSRRILERVENNHLVQSAQTLLLSPCTSRRLTGLLDREVQAGQQALAAAQCSRGPCPTPLTIPAIVVGEEGSAGEDSEERTSQESDKKGLLGEVEGHTVESRTQEPCQEEAMPGEALTGLPAATPEELALGARRKRFLPKVRAGSDGEANKAEERESPTVSPRGPRKGLTPGSPGTPGRERRSPTQARKASMLEVPGAEEEPATGDLVSRSKDSGLDSEPAVDEGKQEALAKQRKAKDLLKAPQVIRKIRVEQFPDSSGSLKLWCQFFNIVSDSVLTWAKDQHPVGEVNRSAGDEGPAALAIVQASPTDCGVYRCTIQNEHGSASTDFCLSPEVLSGFISREEGEVGEEIEMTPMVFAKGLADSGCWGDKLFGRLVSEELRGGGHGLQKASRAKVIYGLEPIFESGRTCIIKVSSLLVFGPSSETSLLGRNYDVTIQGCKIQNMSREYCKIFAAEARAASGFGEVPEIIPLYLIYRPANNIPYATLEEDLGKPLQTYCSRQWGCAGAPAAASSSEALQKCQTFQHWLYQWTNGSFLVTDLTGADWKMTDVQIATKLRGYQGLKESCFPALLDQFASSHQCNTYCDMLGLKPLKGPEAAHPQAKAKGSKSPSAGRKGSQLSPQPQKKGLPSPQGSRKSAPSSRATLQASQAATVQLLGQPPVQDGSSKAQSMR.

The disordered stretch occupies residues 1–37 (MGSRRAAGRGWGLGGRAGAGGDSEDDGPVWTPGPASR). Residues 9 to 21 (RGWGLGGRAGAGG) show a composition bias toward gly residues. The region spanning 77-173 (PLFETTLKSR…SGVLEVGTMT (97 aa)) is the Ig-like 1 domain. Position 229 is a phosphoserine (serine 229). 5 disordered regions span residues 237–288 (STPV…NGED), 302–759 (ELGP…CPRE), 785–950 (SEEA…GTRS), 1078–1128 (EGSA…LTGL), and 1147–1244 (PKVR…QRKA). The span at 320–337 (KDEESKPGEQKLELEKAE) shows a compositional bias: basic and acidic residues. A compositionally biased stretch (polar residues) spans 339 to 353 (SQCSSENVVPSTDKP). A compositionally biased stretch (pro residues) spans 402–426 (APAPAPVPAPALAPAPVPVPAPTPV). Positions 514–532 (ESTTTSLSSQTSESMAQSL) are enriched in low complexity. Polar residues-rich tracts occupy residues 557–566 (SPLQGQTSHK) and 731–744 (ETQS…SLSS). Residues 785–796 (SEEAAFRSHEDG) are compositionally biased toward basic and acidic residues. A compositionally biased stretch (polar residues) spans 917–932 (SPTQSHPPEAMATSSE). 2 stretches are compositionally biased toward basic and acidic residues: residues 1087–1111 (ERTS…ESRT) and 1151–1165 (AGSD…ERES). Serine 1199 bears the Phosphoserine mark. The span at 1231-1244 (DEGKQEALAKQRKA) shows a compositional bias: basic and acidic residues. Residues 1251-1339 (PQVIRKIRVE…GSASTDFCLS (89 aa)) form the Ig-like 2 domain. A disulfide bridge links cysteine 1273 with cysteine 1323. In terms of domain architecture, Alpha-type protein kinase spans 1367 to 1600 (KGLADSGCWG…YCDMLGLKPL (234 aa)). Residues 1603–1680 (PEAAHPQAKA…DGSSKAQSMR (78 aa)) form a disordered region. 2 stretches are compositionally biased toward polar residues: residues 1639–1660 (PQGS…QAAT) and 1671–1680 (DGSSKAQSMR).

Belongs to the protein kinase superfamily. Alpha-type protein kinase family. ALPK subfamily. Expressed in the heart and skeletal muscle of adult mice.

It is found in the nucleus. It catalyses the reaction L-seryl-[protein] + ATP = O-phospho-L-seryl-[protein] + ADP + H(+). The catalysed reaction is L-threonyl-[protein] + ATP = O-phospho-L-threonyl-[protein] + ADP + H(+). Functionally, involved in cardiomyocyte differentiation. The polypeptide is Alpha-protein kinase 3 (Mus musculus (Mouse)).